The primary structure comprises 247 residues: Triosephosphate isomerase (247 aa).

Substrate-binding residues include asparagine 10 and lysine 12. Catalysis depends on histidine 95, which acts as the Electrophile. The Proton acceptor role is filled by glutamate 165.

It belongs to the triosephosphate isomerase family. As to quaternary structure, homodimer.

It catalyses the reaction D-glyceraldehyde 3-phosphate = dihydroxyacetone phosphate. It functions in the pathway carbohydrate biosynthesis; gluconeogenesis. The protein operates within carbohydrate degradation; glycolysis; D-glyceraldehyde 3-phosphate from glycerone phosphate: step 1/1. The polypeptide is Triosephosphate isomerase (TPI1) (Yarrowia lipolytica (strain CLIB 122 / E 150) (Yeast)).